The following is a 406-amino-acid chain: Collagen and calcium-binding EGF domain-containing protein 1 (406 aa).

A signal peptide spans 1-34; that stretch reads MVPPPPSRGGAARGQLGRSLGPLLLLLALGHTWT. One can recognise an EGF-like; calcium-binding domain in the interval 134–175; the sequence is DIDECASSNGTLCAHICINTLGSYRCECREGYIREDDGKTCT. 3 disulfide bridges follow: cysteine 138/cysteine 150, cysteine 146/cysteine 159, and cysteine 161/cysteine 174. An N-linked (GlcNAc...) asparagine glycan is attached at asparagine 142. N-linked (GlcNAc...) asparagine glycosylation occurs at asparagine 182. Disordered regions lie at residues 244–335 and 360–406; these read YLPG…PGSF and RTHS…DFYP. 2 Collagen-like domains span residues 245-290 and 300-333; these read LPGP…PMGP and GRRGPVGPPGAPGRDGSKGERGAPGPRGSPGPPG. Pro residues predominate over residues 270–279; that stretch reads PGMPGPPGQP. Low complexity predominate over residues 281-292; that stretch reads PRGSMGPMGPSP. O-linked (Xyl...) (chondroitin sulfate) serine glycosylation occurs at serine 385. Residues 386 to 406 are compositionally biased toward basic and acidic residues; sequence GDDHPRRTETRDLRAPRDFYP.

This sequence belongs to the CCBE1 family. As to expression, detected in fibroblasts and urine (at protein level). Not expressed in blood or lymphatic endothelial cells.

The protein localises to the secreted. In terms of biological role, required for lymphangioblast budding and angiogenic sprouting from venous endothelium during embryogenesis. The protein is Collagen and calcium-binding EGF domain-containing protein 1 (CCBE1) of Homo sapiens (Human).